The following is a 1892-amino-acid chain: MMILKSFIPGNLISLYMTIINSVVMVGLYYGFLTTLSIGPSYIFLLRARFMEEGEEGTEKRVSATTGFIAGQLMMFISIYYVPLHLALGKPHTITVLALPYLLFHFFWNNHKDFFDHRRPTRNSMRNLSIQCVFLNNLIIQLFNHFILPSSMLARLVNIYMFRCNNNMLFVTSSFVGWLIGHILLMKWVGLVLVWIQQNNLIRSNVLIRSNKYLVSEFRNSMARIFSILLFITCVYYLGRIPSPILTKKLKGISEPEEVGESEEERNIEIETISEGGGANQKQGTEENTSSSLFSEEEVDPSKETEKLRVTGKKKKKIKGEFHFRFKETYYKNRPVYETSYLDGNQESSKLEILKKKEDKYLLWIEKPLVTLLFDSKRWNRPLRYIKNDRVENAIKNEMSQYFFYTCQSDGKEKISFTYPPSLATFGEMIQKKIYFFTPEKWFSDELYTDWSFINELKRRNLSKEFIKRVESLDKESFDLGILEKRTRFSNNETKREYLPKLYDPFLHGPYRGRIKKWGSPLSINQTYKKKNTDPFWINKIHALLLTTDYHDLEQTLDTLNIKSLATEKELSLLTLTEDEQGNIDSEDRVKILKFLFNIVITNPNNQTIRKKSIGIKEISKKVPRWSYKLIDDLEQQEGENEENVTAEHEIRSRKSKRVVIFTNNQANADTYTNTKDANDPDQTDEVALIRYSQQSDFRRDIIKGSMRAQRRKTITWELFQANVHSPLFLDRVDKPLFFSFDISGPLKRISRNWICKNKESKISDYTEKKIEKKDEAKREKYKREEKMRIEIAEAWDSLLLAQVIRGSVLITQSILRKYIILPSLIIVKNIARMLLFQFPEWSEDLTDWNREMHVKCTYNGVQLSETEFPKNWLTDGIQIKILFPFCLKPWHRFKLQPSHKDPMKKKKGQKNDFCFLTVWGMETELPFGSPRKRRSFFEPIFKELKKKIKKWKTKCFIALTILKEKTKLFRKASKETKKWITQSILFLKGIIKELSKINPIPFFGLREPYELGETKKDSIISNKMIHKSSLQIQSMAWTNYSLTEKKIKDLTKRTNTIKNQIQKILIIKDKKNEFLTQEINSSSNKISYQDKILESSKKFWQIVKRRNIRLIRKFYFFINFFIEKIYMDILLYIINIPRTNTQLFLESTKKMIENFIHNNEANQERINKTTKNTTHFISTIKTSLSSLSNISIRNKNEKAFCDLSSLSQAYVFYKLSQTQVISFYKFKPILQYHGTSLFLKNEIKDYFEERGVSHSRLRHHYGLRQKIVWHSGMNEWKNWLRSRYQYDLVQNRWLKLGPGQWRNRVNQHYLAQNKHLTKWDSDEKERLIHYEKKNDFQANSLLTQEYKLNQEQKYKKSNFKKHYGYDFLSYKSINYQDKRDPYAYGSPFQVNKREESSYHYNMDKQNFFDTLRDIPIHNYLGEGDILDAMGNFSHRKFFNWRILDFCLRNKVDIESWVDTSTKSKKNIKTVVKNYQIIDKMDLFYFTIYQDQESNPSNKKGSHFDWMGLNEEILSHPIPNLELWFFPEFVLLYNAYKVKPWIIPIKLLLFNFNGNRNINQNIIENKKRDSLIAPNEKQIIGLENRNQEEKEPIGEGGLVSDAQKQGNFKSVLSNQEKDVEEDYDKSDKKKRRKKKQYKSNTEAELDFFLKRYLRFQLRWDDSLNQRIINNIKVYCLLLRLINPNEIVISSIQRGEMNLDILMIQKDLTLRELMKKGILIIDPVRLSVKNDGQFILYQTISILLVHKNKHQINQRYQEKNYIDKNHFYEFIARHQKMTENKDKNHYDLFVPENILSPNHRRELRIRISFNSRDKNGMHRNAVFLNNVKNCGQVLTKNKHLDSDKKKLIKLKFFLWPNYRLEDLACMNRYWFNTNNGSRFSMIRIRMYPRLKIR.

6 consecutive transmembrane segments (helical) span residues leucine 12–phenylalanine 32, phenylalanine 68–leucine 88, glycine 89–asparagine 109, leucine 128–leucine 148, valine 176–isoleucine 196, and isoleucine 225–isoleucine 245. The span at proline 256–arginine 266 shows a compositional bias: acidic residues. The interval proline 256–valine 299 is disordered. Polar residues predominate over residues asparagine 280–phenylalanine 294. The helical transmembrane segment at phenylalanine 1115–isoleucine 1135 threads the bilayer. The segment at serine 1613–glutamine 1636 is disordered.

It belongs to the TIC214 family. In terms of assembly, part of the Tic complex.

It localises to the plastid. Its subcellular location is the chloroplast inner membrane. Functionally, involved in protein precursor import into chloroplasts. May be part of an intermediate translocation complex acting as a protein-conducting channel at the inner envelope. The protein is Protein TIC 214 of Gossypium hirsutum (Upland cotton).